Reading from the N-terminus, the 266-residue chain is Pyrrolizixenacetamide deacetylase (266 aa).

Threonine 28 provides a ligand contact to acetate. Residue serine 94 is the Nucleophile of the active site. Leucine 95 contributes to the acetate binding site. Residues aspartate 215 and histidine 242 each act as charge relay system in the active site. Histidine 242 provides a ligand contact to acetate.

This sequence belongs to the AB hydrolase superfamily. In terms of assembly, homodimer.

It carries out the reaction pyrrolizixenacetamide + H2O = 3-amino-5,6,7,7a-tetrahydro-1H-pyrrolizin-1-one + acetate + H(+). Involved in the biosynthetic pathway of pyrrolizwilline, a pyrrolizidine alkaloid. Catalyzes the N-deacetylation of pyrrolizixenacetamide. This chain is Pyrrolizixenacetamide deacetylase, found in Xenorhabdus hominickii.